The following is a 416-amino-acid chain: UPF0761 membrane protein Rfer_2991 (416 aa).

A run of 6 helical transmembrane segments spans residues 60–80, 117–137, 156–176, 187–207, 222–242, and 268–288; these read MALVPLVTVALAIFTAFPMFA, LGGAGIALLLVTAVALILTID, VLVYWAALTLGPLVLGVSLSI, VVGVMPGGVQFLLDVLQFFMV, WVKWSHAWAGGMFVSAGLELA, and ILLIWIYVAWIIVLLGAVIAA.

This sequence belongs to the UPF0761 family.

The protein localises to the cell inner membrane. This chain is UPF0761 membrane protein Rfer_2991, found in Albidiferax ferrireducens (strain ATCC BAA-621 / DSM 15236 / T118) (Rhodoferax ferrireducens).